A 225-amino-acid chain; its full sequence is UPF0173 metal-dependent hydrolase Tneu_1348 (225 aa).

It belongs to the UPF0173 family.

In Pyrobaculum neutrophilum (strain DSM 2338 / JCM 9278 / NBRC 100436 / V24Sta) (Thermoproteus neutrophilus), this protein is UPF0173 metal-dependent hydrolase Tneu_1348.